Reading from the N-terminus, the 143-residue chain is Large ribosomal subunit protein uL11 (143 aa).

The protein belongs to the universal ribosomal protein uL11 family. Part of the ribosomal stalk of the 50S ribosomal subunit. Interacts with L10 and the large rRNA to form the base of the stalk. L10 forms an elongated spine to which L12 dimers bind in a sequential fashion forming a multimeric L10(L12)X complex. One or more lysine residues are methylated.

Forms part of the ribosomal stalk which helps the ribosome interact with GTP-bound translation factors. The sequence is that of Large ribosomal subunit protein uL11 from Thiobacillus denitrificans (strain ATCC 25259 / T1).